The chain runs to 38 residues: Photosystem II reaction center protein M (38 aa).

Residues 7-27 (GFVASILFVLVPTVFLLILYI) traverse the membrane as a helical segment.

Belongs to the PsbM family. As to quaternary structure, PSII is composed of 1 copy each of membrane proteins PsbA, PsbB, PsbC, PsbD, PsbE, PsbF, PsbH, PsbI, PsbJ, PsbK, PsbL, PsbM, PsbT, PsbX, PsbY, PsbZ, Psb30/Ycf12, peripheral proteins PsbO, CyanoQ (PsbQ), PsbU, PsbV and a large number of cofactors. It forms dimeric complexes.

The protein resides in the cellular thylakoid membrane. In terms of biological role, one of the components of the core complex of photosystem II (PSII). PSII is a light-driven water:plastoquinone oxidoreductase that uses light energy to abstract electrons from H(2)O, generating O(2) and a proton gradient subsequently used for ATP formation. It consists of a core antenna complex that captures photons, and an electron transfer chain that converts photonic excitation into a charge separation. This subunit is found at the monomer-monomer interface. The chain is Photosystem II reaction center protein M from Nostoc punctiforme (strain ATCC 29133 / PCC 73102).